The primary structure comprises 476 residues: Serine/threonine-protein kinase chk-2 (476 aa).

The region spanning 66 to 127 (FVCGRGSDDA…NGTLVNQEMI (62 aa)) is the FHA domain. One can recognise a Protein kinase domain in the interval 170–436 (HVTSHSLGKG…AVELMSTQWM (267 aa)). ATP is bound by residues 177 to 184 (GKGGFGKV), lysine 199, and 252 to 258 (EYVGGGE). Aspartate 301 acts as the Proton acceptor in catalysis. ATP is bound by residues 305–306 (EN) and aspartate 322.

This sequence belongs to the protein kinase superfamily. CAMK Ser/Thr protein kinase family. CHK2 subfamily. Requires Mg(2+) as cofactor. In terms of tissue distribution, highly expressed in germline tissue.

The protein resides in the nucleus. It carries out the reaction L-seryl-[protein] + ATP = O-phospho-L-seryl-[protein] + ADP + H(+). The enzyme catalyses L-threonyl-[protein] + ATP = O-phospho-L-threonyl-[protein] + ADP + H(+). In terms of biological role, serine/threonine-protein kinase which is required for checkpoint-mediated cell cycle arrest, activation of DNA repair and apoptosis in response to the presence of DNA double-strand breaks. May also negatively regulate cell cycle progression during unperturbed cell cycles. Phosphorylates and inhibits cdc25 phosphatase, preventing entry into mitosis. Required for nuclear reorganization and homologous chromosome pairing during meiotic prophase. The sequence is that of Serine/threonine-protein kinase chk-2 (chk-2) from Caenorhabditis elegans.